A 769-amino-acid chain; its full sequence is Serine protease HtrA-like (769 aa).

Residues 1-20 (MDIGKKHVIPKSQYRRKRRE) show a composition bias toward basic residues. 2 disordered regions span residues 1-287 (MDIG…DKDN) and 324-390 (EDKH…KGRA). 2 stretches are compositionally biased toward basic and acidic residues: residues 21 to 64 (FFHN…ERFK) and 71 to 108 (LEQR…DVSK). Residues 126 to 137 (YEQNSEATLSTK) are compositionally biased toward polar residues. Over residues 138–186 (STDKVESTEMRKLSSDKNKVGHEEQHVLSKPSEHDKETRIDSESSRTDS) the composition is skewed to basic and acidic residues. Positions 247–262 (QQSQNEQTKTYTYGDS) are enriched in polar residues. The segment covering 264-287 (QNDKSNHENDLSHHTPSISDDKDN) has biased composition (basic and acidic residues). Residues 331–347 (ADSSETVGYQSQSTASH) show a composition bias toward polar residues. Residues 348–364 (RSTEKRNISINDHDKLN) are compositionally biased toward basic and acidic residues. The span at 365–390 (GQKTNTKTSANNNQKKATSKLNKGRA) shows a compositional bias: polar residues. Residues 410 to 430 (LVILMGIIILIVILNAIFNNV) form a helical membrane-spanning segment. Active-site charge relay system residues include His-504, Asp-534, and Ser-619. Residues 680 to 733 (IASLNSFERQAVKLPGKVKNGVVVDQVDNNGLADQSGLKKGDVITELDGKLLED) enclose the PDZ domain.

Belongs to the peptidase S1C family.

The protein localises to the cell membrane. The polypeptide is Serine protease HtrA-like (Staphylococcus aureus (strain N315)).